Consider the following 404-residue polypeptide: NADH-quinone oxidoreductase subunit D 1 (404 aa).

This sequence belongs to the complex I 49 kDa subunit family. As to quaternary structure, NDH-1 is composed of 14 different subunits. Subunits NuoB, C, D, E, F, and G constitute the peripheral sector of the complex.

It is found in the cell membrane. It carries out the reaction a quinone + NADH + 5 H(+)(in) = a quinol + NAD(+) + 4 H(+)(out). Functionally, NDH-1 shuttles electrons from NADH, via FMN and iron-sulfur (Fe-S) centers, to quinones in the respiratory chain. The immediate electron acceptor for the enzyme in this species is believed to be a menaquinone. Couples the redox reaction to proton translocation (for every two electrons transferred, four hydrogen ions are translocated across the cytoplasmic membrane), and thus conserves the redox energy in a proton gradient. The polypeptide is NADH-quinone oxidoreductase subunit D 1 (Symbiobacterium thermophilum (strain DSM 24528 / JCM 14929 / IAM 14863 / T)).